Consider the following 133-residue polypeptide: Small ribosomal subunit protein uS8 (133 aa).

Belongs to the universal ribosomal protein uS8 family. In terms of assembly, part of the 30S ribosomal subunit. Contacts proteins S5 and S12.

Its function is as follows. One of the primary rRNA binding proteins, it binds directly to 16S rRNA central domain where it helps coordinate assembly of the platform of the 30S subunit. This is Small ribosomal subunit protein uS8 from Chloroflexus aggregans (strain MD-66 / DSM 9485).